Consider the following 238-residue polypeptide: Calmodulin-binding protein 25 (238 aa).

The span at 68–78 (STNTLSSTVSG) shows a compositional bias: polar residues. The tract at residues 68-87 (STNTLSSTVSGASDPEIIGG) is disordered. The Bipartite nuclear localization signal signature appears at 92-108 (KRNCLLTDGKAAKRRAR). The VQ signature appears at 125–134 (FRQMVQQVTG). The interval 201–220 (SSVGLPSGKPSATADPGGSA) is disordered.

In terms of assembly, interacts with calmodulin (CaM). Interacts with WRKY25 and WRKY51. In terms of tissue distribution, expressed in leaves, flowers and siliques.

It is found in the nucleus. In terms of biological role, calmodulin-binding protein that functions as a negative regulator of osmotic stress tolerance. In Arabidopsis thaliana (Mouse-ear cress), this protein is Calmodulin-binding protein 25.